Reading from the N-terminus, the 232-residue chain is Triosephosphate isomerase (232 aa).

Residue N6–K8 participates in substrate binding. The Electrophile role is filled by H90. Catalysis depends on E159, which acts as the Proton acceptor. Substrate contacts are provided by G165 and S195.

This sequence belongs to the triosephosphate isomerase family. As to quaternary structure, homodimer.

It localises to the cytoplasm. It catalyses the reaction D-glyceraldehyde 3-phosphate = dihydroxyacetone phosphate. It functions in the pathway carbohydrate biosynthesis; gluconeogenesis. The protein operates within carbohydrate degradation; glycolysis; D-glyceraldehyde 3-phosphate from glycerone phosphate: step 1/1. Its function is as follows. Involved in the gluconeogenesis. Catalyzes stereospecifically the conversion of dihydroxyacetone phosphate (DHAP) to D-glyceraldehyde-3-phosphate (G3P). This Wolinella succinogenes (strain ATCC 29543 / DSM 1740 / CCUG 13145 / JCM 31913 / LMG 7466 / NCTC 11488 / FDC 602W) (Vibrio succinogenes) protein is Triosephosphate isomerase.